The primary structure comprises 208 residues: Meiotically up-regulated gene 9 protein (208 aa).

The segment at 77-114 (VPASNEKAARVSNLKTVPSLKRENKEVNANSKPPVKQQ) is disordered.

Functionally, has a role in meiosis. This Schizosaccharomyces pombe (strain 972 / ATCC 24843) (Fission yeast) protein is Meiotically up-regulated gene 9 protein (mug9).